Consider the following 394-residue polypeptide: Flap endonuclease 1 (394 aa).

An N-domain region spans residues 1 to 104 (MGIKQLFSVI…GELAKRFQRK (104 aa)). D34 contacts Mg(2+). DNA contacts are provided by R47 and R70. The Mg(2+) site is built by D86, E158, E160, D179, and D181. An I-domain region spans residues 122-253 (DVEKFSRRTV…STALKLIREH (132 aa)). E158 serves as a coordination point for DNA. 2 residues coordinate DNA: G231 and D233. D233 contacts Mg(2+). Positions 341–349 (QQARIEGFF) are interaction with PCNA. A compositionally biased stretch (basic and acidic residues) spans 356–383 (EEEKKAHKRKLEEQAEQKRKKVKEEKKE). Residues 356-394 (EEEKKAHKRKLEEQAEQKRKKVKEEKKEKAKLKAKPRGA) are disordered. Basic residues predominate over residues 384-394 (KAKLKAKPRGA).

It belongs to the XPG/RAD2 endonuclease family. FEN1 subfamily. Interacts with PCNA. Three molecules of dnr-8/fen1 bind to one PCNA trimer with each molecule binding to one PCNA monomer. PCNA stimulates the nuclease activity without altering cleavage specificity. The cofactor is Mg(2+). In terms of processing, phosphorylated. Phosphorylation upon DNA damage induces relocalization to the nuclear plasma.

It localises to the nucleus. The protein resides in the nucleolus. It is found in the nucleoplasm. Its subcellular location is the mitochondrion. Structure-specific nuclease with 5'-flap endonuclease and 5'-3' exonuclease activities involved in DNA replication and repair. During DNA replication, cleaves the 5'-overhanging flap structure that is generated by displacement synthesis when DNA polymerase encounters the 5'-end of a downstream Okazaki fragment. It enters the flap from the 5'-end and then tracks to cleave the flap base, leaving a nick for ligation. Also involved in the long patch base excision repair (LP-BER) pathway, by cleaving within the apurinic/apyrimidinic (AP) site-terminated flap. Acts as a genome stabilization factor that prevents flaps from equilibrating into structures that lead to duplications and deletions. Also possesses 5'-3' exonuclease activity on nicked or gapped double-stranded DNA, and exhibits RNase H activity. Also involved in replication and repair of rDNA and in repairing mitochondrial DNA. This chain is Flap endonuclease 1 (dnr-8), found in Neurospora crassa (strain ATCC 24698 / 74-OR23-1A / CBS 708.71 / DSM 1257 / FGSC 987).